The chain runs to 245 residues: Probable transcriptional regulatory protein NSE_0641 (245 aa).

The disordered stretch occupies residues 1–22 (MAGHSQYANIKHRKNAQDAKRA).

Belongs to the TACO1 family.

The protein resides in the cytoplasm. This chain is Probable transcriptional regulatory protein NSE_0641, found in Neorickettsia sennetsu (strain ATCC VR-367 / Miyayama) (Ehrlichia sennetsu).